A 324-amino-acid chain; its full sequence is Aspartate carbamoyltransferase catalytic subunit (324 aa).

Residues Arg65 and Thr66 each coordinate carbamoyl phosphate. Position 93 (Lys93) interacts with L-aspartate. Positions 115, 145, and 148 each coordinate carbamoyl phosphate. L-aspartate-binding residues include Arg178 and Arg233. The carbamoyl phosphate site is built by Gly274 and Pro275.

The protein belongs to the aspartate/ornithine carbamoyltransferase superfamily. ATCase family. Heterododecamer (2C3:3R2) of six catalytic PyrB chains organized as two trimers (C3), and six regulatory PyrI chains organized as three dimers (R2).

It catalyses the reaction carbamoyl phosphate + L-aspartate = N-carbamoyl-L-aspartate + phosphate + H(+). It participates in pyrimidine metabolism; UMP biosynthesis via de novo pathway; (S)-dihydroorotate from bicarbonate: step 2/3. In terms of biological role, catalyzes the condensation of carbamoyl phosphate and aspartate to form carbamoyl aspartate and inorganic phosphate, the committed step in the de novo pyrimidine nucleotide biosynthesis pathway. This chain is Aspartate carbamoyltransferase catalytic subunit, found in Nitrosococcus oceani (strain ATCC 19707 / BCRC 17464 / JCM 30415 / NCIMB 11848 / C-107).